A 228-amino-acid chain; its full sequence is Small ribosomal subunit protein uS2 (228 aa).

The protein belongs to the universal ribosomal protein uS2 family.

The chain is Small ribosomal subunit protein uS2 from Blochmanniella pennsylvanica (strain BPEN).